Consider the following 149-residue polypeptide: Probable flagellum biosynthesis repressor protein FlbT (149 aa).

It belongs to the FlbT family.

Its function is as follows. Has a post-transcriptional repressor function in flagellum biogenesis. Associates with the 5'-UTR of fljK mRNA and promotes its degradation. The sequence is that of Probable flagellum biosynthesis repressor protein FlbT from Allorhizobium ampelinum (strain ATCC BAA-846 / DSM 112012 / S4) (Agrobacterium vitis (strain S4)).